The following is a 102-amino-acid chain: Small ribosomal subunit protein uS10 (102 aa).

Belongs to the universal ribosomal protein uS10 family. As to quaternary structure, part of the 30S ribosomal subunit.

Functionally, involved in the binding of tRNA to the ribosomes. The sequence is that of Small ribosomal subunit protein uS10 from Lactobacillus gasseri (strain ATCC 33323 / DSM 20243 / BCRC 14619 / CIP 102991 / JCM 1131 / KCTC 3163 / NCIMB 11718 / NCTC 13722 / AM63).